The primary structure comprises 292 residues: Protease HtpX homolog (292 aa).

2 helical membrane-spanning segments follow: residues 4–24 (IFLF…TLRL) and 42–62 (ALLV…LAMS). His-147 contributes to the Zn(2+) binding site. Residue Glu-148 is part of the active site. Position 151 (His-151) interacts with Zn(2+). 2 helical membrane-spanning segments follow: residues 158-178 (VTLA…SRII) and 198-218 (FVTS…IVMW). A Zn(2+)-binding site is contributed by Glu-224.

The protein belongs to the peptidase M48B family. The cofactor is Zn(2+).

The protein localises to the cell inner membrane. This is Protease HtpX homolog from Nitrosomonas eutropha (strain DSM 101675 / C91 / Nm57).